Consider the following 425-residue polypeptide: Inositol hexakisphosphate kinase 2 (425 aa).

ATP contacts are provided by residues glutamate 206–leucine 208 and aspartate 219. Residues proline 215–glycine 223, lysine 221, and lysine 235–lysine 242 each bind substrate. Aspartate 382 lines the ATP pocket. Residue histidine 385 participates in substrate binding.

Belongs to the inositol phosphokinase (IPK) family. In terms of tissue distribution, highly expressed in small intestine.

Its subcellular location is the nucleus. The enzyme catalyses 1D-myo-inositol hexakisphosphate + ATP = 5-diphospho-1D-myo-inositol 1,2,3,4,6-pentakisphosphate + ADP. Its pathway is phospholipid metabolism; phosphatidylinositol metabolism. In terms of biological role, converts inositol hexakisphosphate (InsP6) to diphosphoinositol pentakisphosphate (InsP7/PP-InsP5). In Rattus norvegicus (Rat), this protein is Inositol hexakisphosphate kinase 2 (Ip6k2).